The chain runs to 340 residues: Ferrochelatase (340 aa).

Residues His189 and Glu292 each contribute to the Fe cation site.

Belongs to the ferrochelatase family.

Its subcellular location is the cytoplasm. It catalyses the reaction heme b + 2 H(+) = protoporphyrin IX + Fe(2+). It participates in porphyrin-containing compound metabolism; protoheme biosynthesis; protoheme from protoporphyrin-IX: step 1/1. Catalyzes the ferrous insertion into protoporphyrin IX. This Pseudomonas fluorescens (strain ATCC BAA-477 / NRRL B-23932 / Pf-5) protein is Ferrochelatase.